Here is a 203-residue protein sequence, read N- to C-terminus: dTTP/UTP pyrophosphatase (203 aa).

The Proton acceptor role is filled by Asp-70.

Belongs to the Maf family. YhdE subfamily. It depends on a divalent metal cation as a cofactor.

Its subcellular location is the cytoplasm. It carries out the reaction dTTP + H2O = dTMP + diphosphate + H(+). The enzyme catalyses UTP + H2O = UMP + diphosphate + H(+). In terms of biological role, nucleoside triphosphate pyrophosphatase that hydrolyzes dTTP and UTP. May have a dual role in cell division arrest and in preventing the incorporation of modified nucleotides into cellular nucleic acids. This is dTTP/UTP pyrophosphatase (maf-1) from Pseudomonas putida (strain ATCC 47054 / DSM 6125 / CFBP 8728 / NCIMB 11950 / KT2440).